The sequence spans 92 residues: Protein S100-A12 (92 aa).

EF-hand domains follow at residues 13-48 and 49-84; these read NIFHQYSVRVGHFDTLNKRELKQLITKELPKTLQNT and KDQPTIDKIFQDLDADKDGAVSFEEFVVLVSRVLKT. H16 is a binding site for Cu cation. Position 16 (H16) interacts with Zn(2+). 2 residues coordinate Ca(2+): S19 and H24. Cu cation is bound at residue D26. A Zn(2+)-binding site is contributed by D26. Ca(2+) contacts are provided by T27 and E32. Residues 38 to 53 form a hinge domain region; it reads TKELPKTLQNTKDQPT. Positions 62, 64, 66, and 73 each coordinate Ca(2+). Cu cation-binding residues include H86 and H90. Positions 86 and 90 each coordinate Zn(2+).

It belongs to the S-100 family. Homodimer. Homooligomer (tetramer or hexamer) in the presence of calcium, zinc and copper ions. Interacts with AGER and both calcium and zinc are essential for the interaction. Interacts with CACYBP in a calcium-dependent manner. Up-regulated in stimulated inflammatory effector cells.

Its subcellular location is the secreted. The protein localises to the cytoplasm. It is found in the cytoskeleton. It localises to the cell membrane. Functionally, S100A12 is a calcium-, zinc- and copper-binding protein which plays a prominent role in the regulation of inflammatory processes and immune response. Its pro-inflammatory activity involves recruitment of leukocytes, promotion of cytokine and chemokine production, and regulation of leukocyte adhesion and migration. Acts as an alarmin or a danger associated molecular pattern (DAMP) molecule and stimulates innate immune cells via binding to receptor for advanced glycation endproducts (AGER). Binding to AGER activates the MAP-kinase and NF-kappa-B signaling pathways leading to production of pro-inflammatory cytokines and up-regulation of cell adhesion molecules ICAM1 and VCAM1. Acts as a monocyte and mast cell chemoattractant. Can stimulate mast cell degranulation and activation which generates chemokines, histamine and cytokines inducing further leukocyte recruitment to the sites of inflammation. Can inhibit the activity of matrix metalloproteinases; MMP2, MMP3 and MMP9 by chelating Zn(2+) from their active sites. This is Protein S100-A12 (S100A12) from Bos taurus (Bovine).